The primary structure comprises 1178 residues: Pyruvate carboxylase, mitochondrial (1178 aa).

The N-terminal 20 residues, 1–20 (MLKFRTVHGGLRLLGIRRTS), are a transit peptide targeting the mitochondrion. An N6-acetyllysine mark is found at K35 and K39. In terms of domain architecture, Biotin carboxylation spans 36–486 (PIKKVMVANR…DTQFIDENPE (451 aa)). An N6-acetyllysine; alternate modification is found at K79. K79 is modified (N6-succinyllysine; alternate). N6-acetyllysine is present on residues K148 and K152. Residues K152 and E236 each coordinate ATP. The ATP-grasp domain maps to 156–353 (RAIAIAAGVP…LVHAQIHVAE (198 aa)). K241 carries the N6-acetyllysine modification. H271 is a binding site for ATP. An N6-acetyllysine mark is found at K297 and K319. Residue R328 is part of the active site. K434 carries the post-translational modification N6-acetyllysine. At K442 the chain carries N6-succinyllysine. One can recognise a Pyruvate carboxyltransferase domain in the interval 563–832 (LLLMDTTFRD…DTEVPMERVF (270 aa)). 571–575 (RDAHQ) lines the substrate pocket. Residue D572 coordinates Mn(2+). K589 is subject to N6-acetyllysine. R644 provides a ligand contact to substrate. K661 and K717 each carry N6-acetyllysine. K741 contacts Mn(2+). K741 carries the post-translational modification N6-carboxylysine. The residue at position 748 (K748) is an N6-acetyllysine. H771 and H773 together coordinate Mn(2+). An N6-acetyllysine modification is found at K892. T908 contributes to the substrate binding site. N6-acetyllysine is present on residues K969 and K992. T1003 carries the phosphothreonine modification. An N6-acetyllysine mark is found at K1061, K1090, and K1124. One can recognise a Biotinyl-binding domain in the interval 1109-1178 (KGQIGAPMPG…EGDDLILEIE (70 aa)). K1144 carries the N6-biotinyllysine modification.

Homotetramer. Interacts (via the biotin carboxylation domain) with SIRT4. Biotin serves as cofactor. Mn(2+) is required as a cofactor. In terms of processing, acetylation of Lys-748 might play a role in catalytic activity regulation.

Its subcellular location is the mitochondrion matrix. It catalyses the reaction hydrogencarbonate + pyruvate + ATP = oxaloacetate + ADP + phosphate + H(+). It functions in the pathway carbohydrate biosynthesis; gluconeogenesis. Pyruvate carboxylase catalyzes a 2-step reaction, involving the ATP-dependent carboxylation of the covalently attached biotin in the first step and the transfer of the carboxyl group to pyruvate in the second. Catalyzes in a tissue specific manner, the initial reactions of glucose (liver, kidney) and lipid (adipose tissue, liver, brain) synthesis from pyruvate. The protein is Pyruvate carboxylase, mitochondrial of Homo sapiens (Human).